We begin with the raw amino-acid sequence, 343 residues long: Probable fructokinase-7 (343 aa).

Gly-2 is modified (N-acetylglycine).

It belongs to the carbohydrate kinase PfkB family.

It catalyses the reaction D-fructose + ATP = D-fructose 6-phosphate + ADP + H(+). It participates in glycan biosynthesis; starch biosynthesis. Functionally, may play an important role in maintaining the flux of carbon towards starch formation. In Arabidopsis thaliana (Mouse-ear cress), this protein is Probable fructokinase-7.